A 303-amino-acid polypeptide reads, in one-letter code: N-acetyl-D-glucosamine kinase (303 aa).

ATP is bound by residues 4-11 (GFDIGGTK) and 133-140 (GVGGGLIF). The Zn(2+) site is built by His157, Cys177, Cys179, and Cys184.

It belongs to the ROK (NagC/XylR) family. NagK subfamily.

It catalyses the reaction N-acetyl-D-glucosamine + ATP = N-acetyl-D-glucosamine 6-phosphate + ADP + H(+). Its pathway is cell wall biogenesis; peptidoglycan recycling. Catalyzes the phosphorylation of N-acetyl-D-glucosamine (GlcNAc) derived from cell-wall degradation, yielding GlcNAc-6-P. The sequence is that of N-acetyl-D-glucosamine kinase from Escherichia coli O7:K1 (strain IAI39 / ExPEC).